We begin with the raw amino-acid sequence, 326 residues long: Protein phosphatase 1 regulatory subunit SDS22 homolog (326 aa).

Positions 1-22 (MSNDKSAEVVVLPRENDEESKE) are disordered. 12 LRR repeats span residues 35-57 (DIDS…LTGF), 58-80 (PKIE…ISSL), 81-102 (VTLT…LESL), 103-126 (VNLV…KLTK), 128-146 (ETLY…LEAL), 147-170 (TQLK…HLVN), 172-190 (DELF…VETL), 191-212 (QKLS…VEQL), 213-236 (NNLK…PLTN), 238-256 (LLLD…VERL), 257-280 (ESLN…QLSK), and 281-304 (LKGL…QYRR).

Belongs to the SDS22 family.

It is found in the nucleus. Functionally, regulatory subunit of protein phosphatase 1. The chain is Protein phosphatase 1 regulatory subunit SDS22 homolog (sds-22) from Caenorhabditis elegans.